A 359-amino-acid chain; its full sequence is Beta-hexosaminidase (359 aa).

Substrate-binding positions include Asp64, Arg72, Arg138, and 168 to 169 (KH). His181 functions as the Proton donor/acceptor in the catalytic mechanism. Asp252 acts as the Nucleophile in catalysis.

Belongs to the glycosyl hydrolase 3 family. NagZ subfamily.

The protein localises to the cytoplasm. It carries out the reaction Hydrolysis of terminal non-reducing N-acetyl-D-hexosamine residues in N-acetyl-beta-D-hexosaminides.. Its pathway is cell wall biogenesis; peptidoglycan recycling. Its function is as follows. Plays a role in peptidoglycan recycling by cleaving the terminal beta-1,4-linked N-acetylglucosamine (GlcNAc) from peptide-linked peptidoglycan fragments, giving rise to free GlcNAc, anhydro-N-acetylmuramic acid and anhydro-N-acetylmuramic acid-linked peptides. The polypeptide is Beta-hexosaminidase (Thiobacillus denitrificans (strain ATCC 25259 / T1)).